A 584-amino-acid chain; its full sequence is Probable terpene synthase 9 (584 aa).

Mg(2+) contacts are provided by aspartate 339, aspartate 343, and glutamate 491. The DDXXD motif signature appears at aspartate 339 to aspartate 343.

It belongs to the terpene synthase family. It depends on Mg(2+) as a cofactor.

Probable sesquiterpene synthase. The chain is Probable terpene synthase 9 (TPS9) from Ricinus communis (Castor bean).